We begin with the raw amino-acid sequence, 156 residues long: Ribosomal RNA large subunit methyltransferase H (156 aa).

Residues L73, G104, and 123–128 (LSALTL) each bind S-adenosyl-L-methionine.

Belongs to the RNA methyltransferase RlmH family. As to quaternary structure, homodimer.

The protein resides in the cytoplasm. It carries out the reaction pseudouridine(1915) in 23S rRNA + S-adenosyl-L-methionine = N(3)-methylpseudouridine(1915) in 23S rRNA + S-adenosyl-L-homocysteine + H(+). In terms of biological role, specifically methylates the pseudouridine at position 1915 (m3Psi1915) in 23S rRNA. The protein is Ribosomal RNA large subunit methyltransferase H of Shewanella sp. (strain MR-7).